The chain runs to 155 residues: Rhombotin-1 (155 aa).

LIM zinc-binding domains are found at residues 21–83 (KGCA…LFGT) and 85–147 (GNCA…GQLN).

It localises to the nucleus. In terms of biological role, may be involved in gene regulation within neural lineage cells potentially by direct DNA binding or by binding to other transcription factors. This chain is Rhombotin-1, found in Danio rerio (Zebrafish).